Reading from the N-terminus, the 145-residue chain is Large ribosomal subunit protein uL11 (145 aa).

Belongs to the universal ribosomal protein uL11 family. Part of the ribosomal stalk of the 50S ribosomal subunit. Interacts with L10 and the large rRNA to form the base of the stalk. L10 forms an elongated spine to which L12 dimers bind in a sequential fashion forming a multimeric L10(L12)X complex. One or more lysine residues are methylated.

In terms of biological role, forms part of the ribosomal stalk which helps the ribosome interact with GTP-bound translation factors. This Rickettsia felis (strain ATCC VR-1525 / URRWXCal2) (Rickettsia azadi) protein is Large ribosomal subunit protein uL11.